The primary structure comprises 213 residues: Probable nicotinate-nucleotide adenylyltransferase (213 aa).

The protein belongs to the NadD family.

The catalysed reaction is nicotinate beta-D-ribonucleotide + ATP + H(+) = deamido-NAD(+) + diphosphate. It functions in the pathway cofactor biosynthesis; NAD(+) biosynthesis; deamido-NAD(+) from nicotinate D-ribonucleotide: step 1/1. In terms of biological role, catalyzes the reversible adenylation of nicotinate mononucleotide (NaMN) to nicotinic acid adenine dinucleotide (NaAD). The polypeptide is Probable nicotinate-nucleotide adenylyltransferase (Trichlorobacter lovleyi (strain ATCC BAA-1151 / DSM 17278 / SZ) (Geobacter lovleyi)).